The chain runs to 107 residues: Proteinase inhibitor I-A (107 aa).

A signal peptide spans 1–22 (MVKFAHVVAFLLLASLIQPLTA). A propeptide spanning residues 23-36 (RDLEINVLQLDVSQ) is cleaved from the precursor.

This sequence belongs to the protease inhibitor I13 (potato type I serine protease inhibitor) family.

The protein resides in the secreted. The polypeptide is Proteinase inhibitor I-A (TIMPB) (Nicotiana tabacum (Common tobacco)).